Reading from the N-terminus, the 147-residue chain is SPI-1 type 3 secretion system pilotin (147 aa).

Residues 1–15 form the signal peptide; sequence MKKFYSCLPVFLLIG. C16 carries N-palmitoyl cysteine lipidation. C16 carries S-diacylglycerol cysteine lipidation.

The protein belongs to the InvH family.

The protein resides in the cell outer membrane. Involved in the synthesis of the type III secretion system (T3SS), also called injectisome, which is used to inject bacterial effector proteins into eukaryotic host cells. Pilot protein that is required for the proper localization of the secretin InvG/SctC in the outer membrane. Necessary for efficient adherence and entry of these organisms into cultured epithelial cells. The polypeptide is SPI-1 type 3 secretion system pilotin (Salmonella choleraesuis (strain SC-B67)).